The following is a 736-amino-acid chain: MAYVAVPAVVDSRSSEAIGLLESFGVTATKEESDVQYQDHDYVLDQLQYMLDGYEAGDVIDALVYRNWLHESVYCLLPPKSQLLEYWKSNPAVIPESVDRRLRKRLMMKKDLRKDDEYNQLVRAFKLSDVYTPLVSSSTSPMTMIQSINQNQIVYSTTDRVIGARISLYAPRKYYSATLSFTLNRCIIPYGKNVAPIGHARFNIGTFPSLASPKCFVLSSVDIESIPNEFIKLFYQRVRSVHANILNDISPQLLSDMLQRKRLRVSSPNERKIAQIMHLPYHVKRGATHVDVYRVDVVDVLFEVVDIKDGLRSVSRKLTLQTVPVSVIELIGLETADYCIRKENGMFTDWFLLLTMLSDGLIDRRTHSQYLINPSSIPPDVIINIYVSGFTNRRVIDVMPEMYDFVKPIGAVLPKGSFKSTIMRVLDEMEVLGVRIMPRCHVVDSDEVGERMQPTFEHAVMEIYKGIAGVDSLEELINWVLGPDLIPHDERLGKLYQSFLPLAKDLLAPVARHFYEESLSEGRLLTFAHADSELLNANYFGHLLRLKIPFITEVNLMIRKNREGGELFQLVLSYLYKMYATSAQPMWFGSLLRLMICPWLHMEKLIGDADAAITSAEVGWHIPKEHLMQDGWCGCEDGFITYVVIRAPKLVLEELREKNWGQYHAQVIVTDRLEVGEPRRVHARVVIKGNHMPSKLISRYACFSLTMRYMMHLTCGHSIGRSSAYGARLVFRSSLA.

It belongs to the orthoreovirus mu-2 protein family. In terms of assembly, interacts with protein mu-NS; in viral inclusions. Interacts with polymerase lambda-3; this interaction stimulates the ATPase activity of mu-2. Requires a divalent metal cation as cofactor.

It localises to the virion. It is found in the host cytoplasm. The protein resides in the host cytoskeleton. Functionally, minor inner capsid (core) component. Displays NTPase and RNA 5'-triphosphatase (RTPase) activities. ATP is the preferred substrate for hydrolysis. May function as a cofactor of polymerase lambda-3. Associates with microtubules and plays a role in the formation, structural organization and morphology of viral inclusions, where the assembly of cores and the replication of viral RNA occur. Together with mu-NS, recruits the other core proteins to these inclusions. This is Microtubule-associated protein mu-2 (M1) from Mammalia (T2J).